Here is a 569-residue protein sequence, read N- to C-terminus: Neutral leucine aminopeptidase, chloroplastic (569 aa).

A chloroplast-targeting transit peptide spans 1–48; it reads MNGVLCSSSSSFHSYPSIFTKFQSSPIWSFSISVTPLCSRRAKRMAHS. The Mn(2+) site is built by Lys339 and Asp344. Lys351 is an active-site residue. Mn(2+) is bound by residues Asp364, Asp424, and Glu426. Arg428 is a catalytic residue.

This sequence belongs to the peptidase M17 family. In terms of assembly, homohexamer (dimer of homotrimers). The cofactor is Mn(2+). In terms of tissue distribution, expressed constitutively at low levels. Expressed in vegetative and reproductive organs, including leaves, stems, roots, cotyledons (after imbibition), pistils, sepals, petals, stamens, and floral buds (at protein level). Present at very low levels in healthy leaves.

Its subcellular location is the plastid. The protein localises to the chloroplast. It catalyses the reaction Release of an N-terminal amino acid, Xaa-|-Yaa-, in which Xaa is preferably Leu, but may be other amino acids including Pro although not Arg or Lys, and Yaa may be Pro. Amino acid amides and methyl esters are also readily hydrolyzed, but rates on arylamides are exceedingly low.. It carries out the reaction Release of N-terminal proline from a peptide.. In terms of biological role, catalyzes the removal of unsubstituted N-terminal amino acids from various peptides. When associated as homohexamer, catalyzes the proteolyzes of Xaa-Leu dipeptides. Possesses leucine aminopeptidase activity against the model substrate leucine-amido methyl coumarin. Presumably involved in the processing and regular turnover of intracellular proteins. Functionally, functions as a molecular chaperone to protect proteins from heat-induced damage. In Solanum lycopersicum (Tomato), this protein is Neutral leucine aminopeptidase, chloroplastic.